The chain runs to 607 residues: DNA primase (607 aa).

The CHC2-type zinc finger occupies 39–63 (CPFHDDKNPSMSISSSKNIFKCWAC). In terms of domain architecture, Toprim spans 267 to 350 (NQLFIVEGYF…IVEIVQWEHN (84 aa)). 3 residues coordinate Mg(2+): Glu-273, Asp-319, and Asp-321.

Belongs to the DnaG primase family. As to quaternary structure, monomer. Interacts with DnaB. Zn(2+) is required as a cofactor. It depends on Mg(2+) as a cofactor.

It carries out the reaction ssDNA + n NTP = ssDNA/pppN(pN)n-1 hybrid + (n-1) diphosphate.. In terms of biological role, RNA polymerase that catalyzes the synthesis of short RNA molecules used as primers for DNA polymerase during DNA replication. The chain is DNA primase from Mycoplasma genitalium (strain ATCC 33530 / DSM 19775 / NCTC 10195 / G37) (Mycoplasmoides genitalium).